The sequence spans 296 residues: Ribosomal RNA small subunit methyltransferase A (296 aa).

S-adenosyl-L-methionine contacts are provided by asparagine 32, leucine 34, glycine 59, glutamate 80, aspartate 105, and asparagine 130.

This sequence belongs to the class I-like SAM-binding methyltransferase superfamily. rRNA adenine N(6)-methyltransferase family. RsmA subfamily.

The protein resides in the cytoplasm. The catalysed reaction is adenosine(1518)/adenosine(1519) in 16S rRNA + 4 S-adenosyl-L-methionine = N(6)-dimethyladenosine(1518)/N(6)-dimethyladenosine(1519) in 16S rRNA + 4 S-adenosyl-L-homocysteine + 4 H(+). Its function is as follows. Specifically dimethylates two adjacent adenosines (A1518 and A1519) in the loop of a conserved hairpin near the 3'-end of 16S rRNA in the 30S particle. May play a critical role in biogenesis of 30S subunits. The chain is Ribosomal RNA small subunit methyltransferase A from Lactiplantibacillus plantarum (strain ATCC BAA-793 / NCIMB 8826 / WCFS1) (Lactobacillus plantarum).